The chain runs to 177 residues: Adenine phosphoribosyltransferase (177 aa).

It belongs to the purine/pyrimidine phosphoribosyltransferase family. Homodimer.

It localises to the cytoplasm. The catalysed reaction is AMP + diphosphate = 5-phospho-alpha-D-ribose 1-diphosphate + adenine. It functions in the pathway purine metabolism; AMP biosynthesis via salvage pathway; AMP from adenine: step 1/1. Functionally, catalyzes a salvage reaction resulting in the formation of AMP, that is energically less costly than de novo synthesis. The polypeptide is Adenine phosphoribosyltransferase (Prosthecochloris aestuarii (strain DSM 271 / SK 413)).